The primary structure comprises 312 residues: MIEFEKPKITKFDESENYGKFVVEPLERGYGTTLGNSLRRVLLSSLPGAAVTSIQIEGVQHEFATIPGVREDVIQIVLAVKGIAIKSYVESEKQIELDVTGPMDVTAGDILTDSDIEIVNKDHYLFSIAEGHSMRAVMTVKKGYGYVPADENKVDGAPIGTIAVDSIYTPVSKVNYQVEPARVGGDSSYDKLTLEITTNGTIVSDEALSLSAKILTDHLNLFVDLSEVAAEAETLVVKDEVKTERVLDKIIEEMDFSVRAYNGLKRAGINTVTDIVEMSEADMIKVKNLGHKSVEEVKVKLTELGLSLKKRK.

Residues 1–226 (MIEFEKPKIT…DHLNLFVDLS (226 aa)) form an alpha N-terminal domain (alpha-NTD) region. Positions 243-312 (TERVLDKIIE…ELGLSLKKRK (70 aa)) are alpha C-terminal domain (alpha-CTD).

The protein belongs to the RNA polymerase alpha chain family. Homodimer. The RNAP catalytic core consists of 2 alpha, 1 beta, 1 beta' and 1 omega subunit. When a sigma factor is associated with the core the holoenzyme is formed, which can initiate transcription.

It carries out the reaction RNA(n) + a ribonucleoside 5'-triphosphate = RNA(n+1) + diphosphate. Its function is as follows. DNA-dependent RNA polymerase catalyzes the transcription of DNA into RNA using the four ribonucleoside triphosphates as substrates. This is DNA-directed RNA polymerase subunit alpha from Lactococcus lactis subsp. cremoris (strain SK11).